The sequence spans 31 residues: Photosystem I reaction center subunit XII (31 aa).

The helical transmembrane segment at Q7–G26 threads the bilayer.

This sequence belongs to the PsaM family.

It localises to the plastid. The protein resides in the chloroplast thylakoid membrane. This Euglena deses protein is Photosystem I reaction center subunit XII.